The following is a 453-amino-acid chain: SH2 domain-containing protein 4A (453 aa).

The stretch at 96-127 (EIIAEQARREAEKEAEQLRKKQEVELSQLSTL) forms a coiled coil. A disordered region spans residues 280–301 (AVKRPPIPPKPKLPPSANNSSI). The span at 284 to 293 (PPIPPKPKLP) shows a compositional bias: pro residues. Residues 347–439 (WFHGIISRQE…LGRELLRFPC (93 aa)) enclose the SH2 domain.

Its subcellular location is the cytoplasm. Its function is as follows. Inhibits estrogen-induced cell proliferation. The sequence is that of SH2 domain-containing protein 4A (sh2d4a) from Xenopus tropicalis (Western clawed frog).